Reading from the N-terminus, the 533-residue chain is Di/tripeptide-binding protein 4 (533 aa).

The N-terminal stretch at 1 to 25 (MLHPLLRHLPLALALALCAAGAAQA) is a signal peptide.

The protein belongs to the bacterial solute-binding protein 5 family. As to quaternary structure, the complex is composed of two ATP-binding proteins (DppD and DppF), two transmembrane proteins (DppB and DppC) and a solute-binding protein (DppA4). Five orthologous SBPs (DppA1-A5) are present in P.aeruginosa, which increases the substrate specificity of the DppBCDF transporter.

Functionally, part of the ABC transporter DppABCDF involved in the uptake of various di/tripeptides. Prefers dipeptides with acidic residues at the C-terminal end. Efficiently uses tripeptides. This chain is Di/tripeptide-binding protein 4, found in Pseudomonas aeruginosa (strain UCBPP-PA14).